A 585-amino-acid chain; its full sequence is Folylpolyglutamate synthase, mitochondrial (585 aa).

A mitochondrion-targeting transit peptide spans 1 to 39 (MSRARCHALFLAAVSPRGATTRVAVRRGLSAWPVLQEPD). 103-106 (GKGS) serves as a coordination point for ATP. Mg(2+) is bound by residues serine 127, glutamate 198, and histidine 226. Residues arginine 361 and aspartate 375 each coordinate ATP. Positions 477–497 (EEQVSPDPWSTPGQEQDGPAS) are disordered. At serine 537 the chain carries Phosphoserine.

Belongs to the folylpolyglutamate synthase family. In terms of assembly, monomer. Requires a monovalent cation as cofactor.

The protein localises to the mitochondrion inner membrane. It is found in the mitochondrion matrix. The protein resides in the cytoplasm. It carries out the reaction (6S)-5,6,7,8-tetrahydrofolyl-(gamma-L-Glu)(n) + L-glutamate + ATP = (6S)-5,6,7,8-tetrahydrofolyl-(gamma-L-Glu)(n+1) + ADP + phosphate + H(+). Its pathway is cofactor biosynthesis; tetrahydrofolylpolyglutamate biosynthesis. Catalyzes conversion of folates to polyglutamate derivatives allowing concentration of folate compounds in the cell and the intracellular retention of these cofactors, which are important substrates for most of the folate-dependent enzymes that are involved in one-carbon transfer reactions involved in purine, pyrimidine and amino acid synthesis. This Bos taurus (Bovine) protein is Folylpolyglutamate synthase, mitochondrial (FPGS).